Reading from the N-terminus, the 1107-residue chain is uncharacterized protein (1107 aa).

The segment covering 180–204 (SGNGSSGGNNNNNNNSLNNSNNSIG) has biased composition (low complexity). Disordered stretches follow at residues 180 to 251 (SGNG…SGNN) and 501 to 530 (LMNI…DNQM). The segment covering 205 to 215 (SSGGNGGGGSN) has biased composition (gly residues). Residues 219-237 (PSMSPQFTSISKTNSPQII) are compositionally biased toward polar residues. Composition is skewed to low complexity over residues 238–251 (NTSS…SGNN) and 501–521 (LMNI…NNND). Coiled coils occupy residues 789-816 (KKDI…IYRE) and 940-1012 (NIDH…NMLK).

This is an uncharacterized protein from Dictyostelium discoideum (Social amoeba).